The chain runs to 491 residues: Protein DETOXIFICATION 56 (491 aa).

A run of 12 helical transmembrane segments spans residues 39–59, 72–92, 111–131, 154–174, 181–201, 212–232, 261–281, 291–311, 336–356, 379–399, 409–429, and 438–458; these read LPLV…SVFL, LGFS…SAAM, TLFM…FLWL, LLYL…KAYL, LPIM…NIVL, MAVW…VIVV, GPCC…VLLT, VSIL…MLSL, YTTL…MIAF, MLIM…GEIV, MYAN…TLAF, and FLIG…IFIA.

This sequence belongs to the multi antimicrobial extrusion (MATE) (TC 2.A.66.1) family. In terms of assembly, interacts with BCA4 and HT1. Preferentially expressed in guard cells.

Its subcellular location is the cell membrane. Could function as a HCO(3)(-) -sensing component in the CO(2) signaling pathway in guard cells. Acts as an upstream repressor of HT1. Plays a role in stomatal response to CO(2). This chain is Protein DETOXIFICATION 56, found in Arabidopsis thaliana (Mouse-ear cress).